A 580-amino-acid chain; its full sequence is N(6)-adenosine-methyltransferase catalytic subunit METTL3 (580 aa).

A disordered region spans residues 1–70 (MSDTWSSIQA…PKPSTASAVP (70 aa)). Ser2 carries the N-acetylserine; alternate modification. Ser2 carries the post-translational modification Phosphoserine; alternate. Basic and acidic residues predominate over residues 28-37 (QDSGHLDLRN). A phosphoserine mark is found at Ser43, Ser48, and Ser50. Residues Lys177, Lys211, Lys212, and Lys215 each participate in a glycyl lysine isopeptide (Lys-Gly) (interchain with G-Cter in SUMO1) cross-link. Positions 198 to 219 (LNSSASEPAKEPAKKSRKHAAS) are disordered. A Nuclear localization signal motif is present at residues 210–215 (AKKSRK). Ser219 and Ser243 each carry phosphoserine. Thr348 carries the post-translational modification Phosphothreonine. Residue Ser350 is modified to Phosphoserine. Residues 377–378 (DI) and Asp395 contribute to the S-adenosyl-L-methionine site. Positions 396–410 (PPWDIHMELPYGTLT) are gate loop 1. 2 interaction with METTL14 regions span residues 450 to 454 (ERVDE) and 464 to 480 (QRII…NHGK). Residues 462-479 (QLQRIIRTGRTGHWLNHG) are interphase loop. The interval 465–478 (RIIRTGRTGHWLNH) is positively charged region required for RNA-binding. Positions 507-515 (VRSTSHKPD) are gate loop 2. S-adenosyl-L-methionine is bound by residues Lys513, 536–539 (RPHN), and 549–550 (NQ).

The protein belongs to the MT-A70-like family. In terms of assembly, heterodimer; heterodimerizes with METTL14 to form an antiparallel heterodimer that constitutes an active methyltransferase. Component of the WMM complex, a N6-methyltransferase complex composed of a catalytic subcomplex, named MAC, and of an associated subcomplex, named MACOM. The MAC subcomplex is composed of METTL3 and METTL14. The MACOM subcomplex is composed of WTAP, ZC3H13, CBLL1/HAKAI, VIRMA, and, in some cases of RBM15 (RBM15 or RBM15B). Interacts with NCBP1/CBP80. Interacts with EIF4E. Interacts with EIF3B. In terms of processing, sumoylation inhibits the N6-adenosine-methyltransferase activity. Sumoylation does not affect subcellular location or interaction with METTL14. Desumoylated by SENP1. In terms of tissue distribution, widely expressed at low level. Expressed in spleen, thymus, prostate, testis, ovary, small intestine, colon and peripheral blood leukocytes.

The protein resides in the nucleus. It is found in the nucleus speckle. The protein localises to the cytoplasm. The enzyme catalyses an adenosine in mRNA + S-adenosyl-L-methionine = an N(6)-methyladenosine in mRNA + S-adenosyl-L-homocysteine + H(+). With respect to regulation, methyltransferase activity is regulated by miRNAs via a sequence pairing mechanism. Methyltransferase activity is inhibited by sumoylation. Functionally, the METTL3-METTL14 heterodimer forms a N6-methyltransferase complex that methylates adenosine residues at the N(6) position of some RNAs and regulates various processes such as the circadian clock, differentiation of embryonic and hematopoietic stem cells, cortical neurogenesis, response to DNA damage, differentiation of T-cells and primary miRNA processing. In the heterodimer formed with METTL14, METTL3 constitutes the catalytic core. N6-methyladenosine (m6A), which takes place at the 5'-[AG]GAC-3' consensus sites of some mRNAs, plays a role in mRNA stability, processing, translation efficiency and editing. M6A acts as a key regulator of mRNA stability: methylation is completed upon the release of mRNA into the nucleoplasm and promotes mRNA destabilization and degradation. In embryonic stem cells (ESCs), m6A methylation of mRNAs encoding key naive pluripotency-promoting transcripts results in transcript destabilization, promoting differentiation of ESCs. M6A regulates the length of the circadian clock: acts as an early pace-setter in the circadian loop by putting mRNA production on a fast-track for facilitating nuclear processing, thereby providing an early point of control in setting the dynamics of the feedback loop. M6A also regulates circadian regulation of hepatic lipid metabolism. M6A regulates spermatogonial differentiation and meiosis and is essential for male fertility and spermatogenesis. Also required for oogenesis. Involved in the response to DNA damage: in response to ultraviolet irradiation, METTL3 rapidly catalyzes the formation of m6A on poly(A) transcripts at DNA damage sites, leading to the recruitment of POLK to DNA damage sites. M6A is also required for T-cell homeostasis and differentiation: m6A methylation of transcripts of SOCS family members (SOCS1, SOCS3 and CISH) in naive T-cells promotes mRNA destabilization and degradation, promoting T-cell differentiation. Inhibits the type I interferon response by mediating m6A methylation of IFNB. M6A also takes place in other RNA molecules, such as primary miRNA (pri-miRNAs). Mediates m6A methylation of Xist RNA, thereby participating in random X inactivation: m6A methylation of Xist leads to target YTHDC1 reader on Xist and promote transcription repression activity of Xist. M6A also regulates cortical neurogenesis: m6A methylation of transcripts related to transcription factors, neural stem cells, the cell cycle and neuronal differentiation during brain development promotes their destabilization and decay, promoting differentiation of radial glial cells. METTL3 mediates methylation of pri-miRNAs, marking them for recognition and processing by DGCR8. Acts as a positive regulator of mRNA translation independently of the methyltransferase activity: promotes translation by interacting with the translation initiation machinery in the cytoplasm. Its overexpression in a number of cancer cells suggests that it may participate in cancer cell proliferation by promoting mRNA translation. During human coronavirus SARS-CoV-2 infection, adds m6A modifications in SARS-CoV-2 RNA leading to decreased RIGI binding and subsequently dampening the sensing and activation of innate immune responses. The polypeptide is N(6)-adenosine-methyltransferase catalytic subunit METTL3 (Homo sapiens (Human)).